A 134-amino-acid chain; its full sequence is Profilin-1 (134 aa).

Cys-13 and Cys-118 are disulfide-bonded. Residues 84 to 100 (AVIRGKKGSGGITIKKT) carry the Involved in PIP2 interaction motif. Phosphothreonine is present on Thr-114.

It belongs to the profilin family. Occurs in many kinds of cells as a complex with monomeric actin in a 1:1 ratio. In terms of processing, phosphorylated by MAP kinases.

It is found in the cytoplasm. The protein resides in the cytoskeleton. Functionally, binds to actin and affects the structure of the cytoskeleton. At high concentrations, profilin prevents the polymerization of actin, whereas it enhances it at low concentrations. The polypeptide is Profilin-1 (Olea europaea (Common olive)).